Here is a 20-residue protein sequence, read N- to C-terminus: Isocitrate dehydrogenase [NADP] (20 aa).

It belongs to the isocitrate and isopropylmalate dehydrogenases family. It depends on Mn(2+) as a cofactor. Mg(2+) is required as a cofactor.

The protein resides in the cytoplasm. It catalyses the reaction D-threo-isocitrate + NADP(+) = 2-oxoglutarate + CO2 + NADPH. This is Isocitrate dehydrogenase [NADP] from Naegleria fowleri (Brain eating amoeba).